Reading from the N-terminus, the 631-residue chain is ATP-dependent DNA helicase 2 subunit 1 (631 aa).

The region spanning 262 to 487 (FYLGPNLSMS…VEFFQKIIKK (226 aa)) is the Ku domain. Positions 550–570 (AEPHKKRAAKSTTAGASGPKM) are disordered.

It belongs to the ku70 family. Heterodimer of a 70 kDa and a 80 kDa subunit.

It is found in the nucleus. The protein resides in the chromosome. It carries out the reaction ATP + H2O = ADP + phosphate + H(+). In terms of biological role, single-stranded DNA-dependent ATP-dependent helicase. Involved in non-homologous end joining (NHEJ) DNA double strand break repair. Sequence-specific DNA-binding protein that has a high affinity for a 31 bp sequence in the Yp1 gene. Site-specific DNA binding to 31 bp P element inverted repeats. This is ATP-dependent DNA helicase 2 subunit 1 (Irbp) from Drosophila melanogaster (Fruit fly).